The chain runs to 415 residues: MKLSLSKVTSGARLGVISNFGRNGDKTLEVPGCLLYTKTASPPHLTHDTLQTIEGVPAVTHITLSTLAEHQEVLEEYKEGIGKFAGLPDAVFYCSTHDPVSPCPTGYNTNKAVSLWGSGGRIEMTTQKFISAQRVLRPDWFQCLSDGEVTPGGNSRKRIKKSVDRSLVFLDECLQLLSEHEELKPCVLIGAVEGGDLLDERLRSARETAKRPVGGFLLDGFHGISAGNEAKLSLVSAVTAELPEDKPRFIHGVGRPDEVLEFIQRGVDLFDSCFPYQVTERGCALIFTHCHRPDPETAVLEKSEMSDTERNGDVGAEIEEPDADQAEMTPFEICLKEKRFREDFGPLLEGCTCYCCRNHSRAYVHHLLMAKELLAGILLMIHNFQHYFSFFSSIRAALRDGEIKALAELIRKQNS.

Residues Cys351, Cys353, Cys356, and His382 each coordinate Zn(2+).

It belongs to the queuine tRNA-ribosyltransferase family. QTRT2 subfamily. In terms of assembly, heterodimer of a catalytic subunit qtrt1 and an accessory subunit qtrt2. The cofactor is Zn(2+).

The protein resides in the cytoplasm. The protein localises to the mitochondrion outer membrane. Its function is as follows. Non-catalytic subunit of the queuine tRNA-ribosyltransferase (TGT) that catalyzes the base-exchange of a guanine (G) residue with queuine (Q) at position 34 (anticodon wobble position) in tRNAs with GU(N) anticodons (tRNA-Asp, -Asn, -His and -Tyr), resulting in the hypermodified nucleoside queuosine (7-(((4,5-cis-dihydroxy-2-cyclopenten-1-yl)amino)methyl)-7-deazaguanosine). This chain is Queuine tRNA-ribosyltransferase accessory subunit 2, found in Xenopus laevis (African clawed frog).